Reading from the N-terminus, the 171-residue chain is UPF0398 protein SPy_1647/M5005_Spy1353 (171 aa).

Belongs to the UPF0398 family.

The sequence is that of UPF0398 protein SPy_1647/M5005_Spy1353 from Streptococcus pyogenes serotype M1.